The following is a 124-amino-acid chain: Small ribosomal subunit protein uS12 (124 aa).

3-methylthioaspartic acid is present on Asp-89. The tract at residues 103–124 is disordered; that stretch reads DTAGVKDRRQGRSKYGAKRPKD. A compositionally biased stretch (basic residues) spans 113–124; the sequence is GRSKYGAKRPKD.

Belongs to the universal ribosomal protein uS12 family. Part of the 30S ribosomal subunit. Contacts proteins S8 and S17. May interact with IF1 in the 30S initiation complex.

In terms of biological role, with S4 and S5 plays an important role in translational accuracy. Its function is as follows. Interacts with and stabilizes bases of the 16S rRNA that are involved in tRNA selection in the A site and with the mRNA backbone. Located at the interface of the 30S and 50S subunits, it traverses the body of the 30S subunit contacting proteins on the other side and probably holding the rRNA structure together. The combined cluster of proteins S8, S12 and S17 appears to hold together the shoulder and platform of the 30S subunit. This chain is Small ribosomal subunit protein uS12, found in Acaryochloris marina (strain MBIC 11017).